The sequence spans 455 residues: MKKIEMYHHKKVLVLGLARSGVSAATIMHKLGAFVTVNDQKPFSENPEAQGLLEQGIKVICGSHPIELLDEGFELVIKNPGIPYNNPMIEKALKLKIPVITEVELAYQISEAPIVGITGTNGKTTTTTIIHHMLNAHKENSSLLAGNIGFPASAVAENATSDQYISMELSSFQLMGVQTFKPHISVITNIYEAHLDYHTDRSEYVQAKWHIQQNQTADDFLVINWDQEELKNLTKQTKAQVIPFSTTQRLEQGSYVQNGNIMFDDEVIGSRDSILLPGEHNLENILASVAVAKTLGVTNEEIMYVLETFKGVEHRTQFVVEWQGRKFYNDSKATNILATQSALKGFKNPVVLLAGGLDRGNSFDELLPFFKNVKSLIVFGETADKIGRVGKIAGIEVHYVDDVEAAVPVAYRESAPGDIILLSPACASWDQYRTFEVRGNAYMDAISELIEEVEK.

An ATP-binding site is contributed by 119-125 (GTNGKTT).

This sequence belongs to the MurCDEF family.

The protein localises to the cytoplasm. It catalyses the reaction UDP-N-acetyl-alpha-D-muramoyl-L-alanine + D-glutamate + ATP = UDP-N-acetyl-alpha-D-muramoyl-L-alanyl-D-glutamate + ADP + phosphate + H(+). It participates in cell wall biogenesis; peptidoglycan biosynthesis. Its function is as follows. Cell wall formation. Catalyzes the addition of glutamate to the nucleotide precursor UDP-N-acetylmuramoyl-L-alanine (UMA). The protein is UDP-N-acetylmuramoylalanine--D-glutamate ligase of Listeria innocua serovar 6a (strain ATCC BAA-680 / CLIP 11262).